The primary structure comprises 424 residues: Myb family transcription factor RLI1 (424 aa).

The segment at 144–165 is disordered; that stretch reads RPQKRDSGERTPLPPPSQQQHQ. The 61-residue stretch at 238–298 folds into the HTH myb-type domain; that stretch reads APSKTRIRWT…HLQKYRIAKY (61 aa). Residues 269 to 294 constitute a DNA-binding region (H-T-H motif); that stretch reads PKGILKLMNSDGLTIYHIKSHLQKYR. Positions 342–347 match the LHEQLE motif; the sequence is LHEQLE. A coiled-coil region spans residues 342 to 391; that stretch reads LHEQLEIQRNLQLRIEEQGKRLQKMFEDQLKASRSVMEPQELDDVVAFAA.

Belongs to the MYB-CC family. As to quaternary structure, homodimer. Interacts with PHR2 in the nucleus. Interacts with SPX1 and SPX2 in the nucleus; these interactions prevent binding to the promoters of target genes, thus regulating negatively leaf inclination in response to phosphate (Pi) starvation.

The protein resides in the nucleus. Transcription factor binding to specific DNA sequences of target genes promoters, such as the motif R1BS 5'-NAKATNCN-3' and the motif P1BS 5'-GNATATNC-3' to trigger their expression. Nitrate-induced component involved in modulating phosphate (Pi) response and homeostasis together with PHR2; activates directly the expression of Pi starvation-induced (PSI) genes upon nitrate disponibility, thus triggering the nitrate-induced phosphate response (NIPR) promoting Pi uptake activity. Involved in the shoot architecture; positively regulates leaf inclination by affecting lamina joint cell elongation via the direct promotion of ILI4/BU1 and BC1 genes expression, especially in response to phosphate (Pi) availability. Regulates both brassinolide (BL) biosynthesis and signaling by directly activating BL-biosynthesis and signaling genes. The sequence is that of Myb family transcription factor RLI1 from Oryza sativa subsp. indica (Rice).